We begin with the raw amino-acid sequence, 26 residues long: Conotoxin Eb6.18 (26 aa).

2 disulfide bridges follow: Cys-7/Cys-18 and Cys-13/Cys-25.

It belongs to the conotoxin O1 superfamily. As to expression, expressed by the venom duct.

It is found in the secreted. This Conus ebraeus (Hebrew cone) protein is Conotoxin Eb6.18 (E1).